We begin with the raw amino-acid sequence, 942 residues long: PH and SEC7 domain-containing protein C11E3.11c (942 aa).

Positions 1 to 18 (MSRNASNAYLKNGNSTPS) are enriched in polar residues. 2 disordered regions span residues 1-128 (MSRN…TRLN) and 259-308 (SRNL…ETTR). Positions 24–40 (PSSLSQRSKTSTRSSKP) are enriched in low complexity. 4 stretches are compositionally biased toward polar residues: residues 50–60 (WFKNESSSRHP), 90–125 (ASMS…SSRT), 271–284 (YGNS…SSNY), and 292–305 (NRQS…STSE). The SEC7 domain occupies 295–497 (SSLSIPKSTS…LSSYKSFASN (203 aa)). The PH domain occupies 681 to 804 (PYIKQGILKF…WIDALNYWAA (124 aa)).

The polypeptide is PH and SEC7 domain-containing protein C11E3.11c (Schizosaccharomyces pombe (strain 972 / ATCC 24843) (Fission yeast)).